We begin with the raw amino-acid sequence, 310 residues long: MASGAKLEASHPPKAANAAAPAKKVHYPFWFGGSASCFAAAVTHPLDLVKVRLQTRGPGAPSTMVGTFVHVFKNDGFFGLYSGLSAAILRQLTYSTTRFGIYEELKNHFTSPDSPPGLFTLIGMASASGFIGGMAGNPADVLNVRMQSDAALPPAQRRNYRNAIHGLVTMTRTEGPASLFRGVWPNSTRAVLMTTSQLASYDTFKRLCLENLGMSDNMGTHFTASFMAGFVATTVCSPVDVIKTRVMTASPAEGRSQSIVGLLRDITRKEGLAWAFRGWVPSFIRLGPHTIATFIFLEEHKKLYRLLKGL.

Solcar repeat units follow at residues 23-108 (KKVH…LKNH), 115-207 (PPGL…FKRL), and 216-303 (DNMG…HKKL). The next 6 membrane-spanning stretches (helical) occupy residues 29 to 49 (FWFG…LDLV), 85 to 105 (SAAI…YEEL), 122 to 142 (IGMA…ADVL), 186 to 206 (NSTR…TFKR), 222 to 242 (FTAS…VDVI), and 275 to 296 (AFRG…TFIF).

It belongs to the mitochondrial carrier (TC 2.A.29) family.

Its subcellular location is the mitochondrion inner membrane. Functionally, mitochondrial transporter that does not mediate citrate export from mitochondria to cytoplasm. Its exact function has still to be determined. The sequence is that of Mitochondrial citrate transporter F from Aspergillus niger (strain ATCC 1015 / CBS 113.46 / FGSC A1144 / LSHB Ac4 / NCTC 3858a / NRRL 328 / USDA 3528.7).